The primary structure comprises 112 residues: MDPVDPEMPPWHHPGSKPQTPCNNCYCKRCCYHCYVCFTKKGLGISHGRKKRRRPAAAASYPDNKDPVPEQHTGRKQKRQEEQEKKVEKETGPSGQPCHQDSCNSCTRISGQ.

An interaction with human CREBBP region spans residues 1 to 24 (MDPVDPEMPPWHHPGSKPQTPCNN). The interval 1–48 (MDPVDPEMPPWHHPGSKPQTPCNNCYCKRCCYHCYVCFTKKGLGISHG) is transactivation. Zn(2+) is bound by residues Cys-22, Cys-25, and Cys-27. Positions 22–37 (CNNCYCKRCCYHCYVC) are cysteine-rich. The residue at position 28 (Lys-28) is an N6-acetyllysine; by host PCAF. Zn(2+)-binding residues include Cys-30, His-33, Cys-34, and Cys-37. Positions 38 to 48 (FTKKGLGISHG) are core. Residues 45–112 (ISHGRKKRRR…CNSCTRISGQ (68 aa)) form a disordered region. Residues 49–56 (RKKRRRPA) carry the Nuclear localization signal, RNA-binding (TAR), and protein transduction motif. Positions 49–82 (RKKRRRPAAAASYPDNKDPVPEQHTGRKQKRQEE) are interaction with the host capping enzyme RNGTT. An N6-acetyllysine; by host EP300 and GCN5L2 mark is found at Lys-50 and Lys-51. Arg-52 and Arg-53 each carry asymmetric dimethylarginine; by host PRMT6. Residues 63–91 (DNKDPVPEQHTGRKQKRQEEQEKKVEKET) show a composition bias toward basic and acidic residues. Residues 93 to 112 (PSGQPCHQDSCNSCTRISGQ) are compositionally biased toward polar residues.

The protein belongs to the lentiviruses Tat family. As to quaternary structure, interacts with host CCNT1. Associates with the P-TEFb complex composed at least of Tat, P-TEFb (CDK9 and CCNT1), TAR RNA, RNA Pol II. Recruits the HATs CREBBP, TAF1/TFIID, EP300, PCAF and GCN5L2. Interacts with host KAT5/Tip60; this interaction targets the latter to degradation. Interacts with the host deacetylase SIRT1. Interacts with host capping enzyme RNGTT; this interaction stimulates RNGTT. Binds to host KDR, and to the host integrins ITGAV/ITGB3 and ITGA5/ITGB1. Interacts with host KPNB1/importin beta-1 without previous binding to KPNA1/importin alpha-1. Interacts with EIF2AK2. Interacts with host nucleosome assembly protein NAP1L1; this interaction may be required for the transport of Tat within the nucleus, since the two proteins interact at the nuclear rim. Interacts with host C1QBP/SF2P32; this interaction involves lysine-acetylated Tat. Interacts with the host chemokine receptors CCR2, CCR3 and CXCR4. Interacts with host DPP4/CD26; this interaction may trigger an anti-proliferative effect. Interacts with host LDLR. Interacts with the host extracellular matrix metalloproteinase MMP1. Interacts with host PRMT6; this interaction mediates Tat's methylation. Interacts with, and is ubiquitinated by MDM2/Hdm2. Interacts with host PSMC3 and HTATIP2. Interacts with STAB1; this interaction may overcome SATB1-mediated repression of IL2 and IL2RA (interleukin) in T cells by binding to the same domain than HDAC1. Interacts (when acetylated) with human CDK13, thereby increasing HIV-1 mRNA splicing and promoting the production of the doubly spliced HIV-1 protein Nef. Interacts with host TBP; this interaction modulates the activity of transcriptional pre-initiation complex. Interacts with host RELA. Interacts with host PLSCR1; this interaction negatively regulates Tat transactivation activity by altering its subcellular distribution. Asymmetrical arginine methylation by host PRMT6 seems to diminish the transactivation capacity of Tat and affects the interaction with host CCNT1. In terms of processing, acetylation by EP300, CREBBP, GCN5L2/GCN5 and PCAF regulates the transactivation activity of Tat. EP300-mediated acetylation of Lys-50 promotes dissociation of Tat from the TAR RNA through the competitive binding to PCAF's bromodomain. In addition, the non-acetylated Tat's N-terminus can also interact with PCAF. PCAF-mediated acetylation of Lys-28 enhances Tat's binding to CCNT1. Lys-50 is deacetylated by SIRT1. Post-translationally, polyubiquitination by host MDM2 does not target Tat to degradation, but activates its transactivation function and fosters interaction with CCNT1 and TAR RNA. Phosphorylated by EIF2AK2 on serine and threonine residues adjacent to the basic region important for TAR RNA binding and function. Phosphorylation of Tat by EIF2AK2 is dependent on the prior activation of EIF2AK2 by dsRNA.

It is found in the host nucleus. It localises to the host nucleolus. The protein resides in the host cytoplasm. Its subcellular location is the secreted. Functionally, transcriptional activator that increases RNA Pol II processivity, thereby increasing the level of full-length viral transcripts. Recognizes a hairpin structure at the 5'-LTR of the nascent viral mRNAs referred to as the transactivation responsive RNA element (TAR) and recruits the cyclin T1-CDK9 complex (P-TEFb complex) that will in turn hyperphosphorylate the RNA polymerase II to allow efficient elongation. The CDK9 component of P-TEFb and other Tat-activated kinases hyperphosphorylate the C-terminus of RNA Pol II that becomes stabilized and much more processive. Other factors such as HTATSF1/Tat-SF1, SUPT5H/SPT5, and HTATIP2 are also important for Tat's function. Besides its effect on RNA Pol II processivity, Tat induces chromatin remodeling of proviral genes by recruiting the histone acetyltransferases (HATs) CREBBP, EP300 and PCAF to the chromatin. This also contributes to the increase in proviral transcription rate, especially when the provirus integrates in transcriptionally silent region of the host genome. To ensure maximal activation of the LTR, Tat mediates nuclear translocation of NF-kappa-B by interacting with host RELA. Through its interaction with host TBP, Tat may also modulate transcription initiation. Tat can reactivate a latently infected cell by penetrating in it and transactivating its LTR promoter. In the cytoplasm, Tat is thought to act as a translational activator of HIV-1 mRNAs. Extracellular circulating Tat can be endocytosed by surrounding uninfected cells via the binding to several surface receptors such as CD26, CXCR4, heparan sulfate proteoglycans (HSPG) or LDLR. Neurons are rarely infected, but they internalize Tat via their LDLR. Through its interaction with nuclear HATs, Tat is potentially able to control the acetylation-dependent cellular gene expression. Modulates the expression of many cellular genes involved in cell survival, proliferation or in coding for cytokines or cytokine receptors. Tat plays a role in T-cell and neurons apoptosis. Tat induced neurotoxicity and apoptosis probably contribute to neuroAIDS. Circulating Tat also acts as a chemokine-like and/or growth factor-like molecule that binds to specific receptors on the surface of the cells, affecting many cellular pathways. In the vascular system, Tat binds to ITGAV/ITGB3 and ITGA5/ITGB1 integrins dimers at the surface of endothelial cells and competes with bFGF for heparin-binding sites, leading to an excess of soluble bFGF. This chain is Protein Tat, found in Homo sapiens (Human).